A 529-amino-acid chain; its full sequence is BAR/IMD domain-containing adapter protein 2-like 2 (529 aa).

In terms of domain architecture, IMD spans 1–239 (MAPEMDQFYR…HSPGLLGPVL (239 aa)). Disordered regions lie at residues 221–332 (EASR…GGAR) and 399–529 (NPLN…PLIR). Residues Ser231, Ser272, and Ser304 each carry the phosphoserine modification. Over residues 301–317 (SASSLYSSSTQRSRSNS) the composition is skewed to low complexity. Positions 321–331 (RPGGGGGGGGA) are enriched in gly residues. The 64-residue stretch at 329-392 (GGARRVRALV…PEAYVKPLDE (64 aa)) folds into the SH3 domain. Positions 439-459 (GNSTASSDYWDGQSRSRTPSH) are enriched in polar residues. Residues 473 to 484 (PSSRRSSMGSMG) are compositionally biased toward low complexity. A phosphoserine mark is found at Ser479 and Ser482.

The protein localises to the cell membrane. It localises to the cell junction. It is found in the cytoplasmic vesicle membrane. In terms of biological role, phosphoinositides-binding protein that induces the formation of planar or gently curved membrane structures. Binds to phosphoinositides, including to phosphatidylinositol 4,5-bisphosphate (PtdIns(4,5)P2) headgroups. There seems to be no clear preference for a specific phosphoinositide. This Bos taurus (Bovine) protein is BAR/IMD domain-containing adapter protein 2-like 2 (BAIAP2L2).